The following is a 338-amino-acid chain: Acyl-CoA Delta(11) desaturase (338 aa).

2 helical membrane-spanning segments follow: residues 33–53 and 61–81; these read IVYFNIITFAYWHIAGLYGLY and WATVLFSFFLFVVAEVGVTAG. Residues 83–88 carry the Histidine box-1 motif; sequence HRLWSH. The chain crosses the membrane as a helical span at residues 97–117; sequence LQILLMVMNSLAFQNTVIDWV. The Histidine box-2 signature appears at 120–124; that stretch reads HRLHH. Transmembrane regions (helical) follow at residues 181-201 and 212-234; these read AIPFIGAVCFVLPTLIPVYGW and AMLRYIMNLNVTFLVNSAAHIYG. The short motif at 260 to 264 is the Histidine box-3 element; sequence HNYHH. The tract at residues 318–338 is disordered; it reads TNLWGLEDVDTPEDLKNTKGE.

This sequence belongs to the fatty acid desaturase type 1 family. Fe cation is required as a cofactor. In terms of tissue distribution, detected in the pheromone gland.

Its subcellular location is the membrane. It carries out the reaction an 11,12-saturated fatty acyl-CoA + 2 Fe(II)-[cytochrome b5] + O2 + 2 H(+) = an (11Z)-Delta(11)-fatty acyl-CoA + 2 Fe(III)-[cytochrome b5] + 2 H2O. Functionally, catalyzes the formation of delta(11) fatty acyl precursors in the pheromone gland, and has high activity towards palmitic acid and stearic acid. This Spodoptera littoralis (Egyptian cotton leafworm) protein is Acyl-CoA Delta(11) desaturase.